A 615-amino-acid polypeptide reads, in one-letter code: MPKLRSATSTEGRNMAGARALWRATGVKDNDFGKPIIAISNSFTQFVPGHVHLKDMGQLVAGAIEEAGGIAKEFNTIAVDDGIAMGHGGMLYSLPSRELIADSVEYMVNAHCADALVCISNCDKITPGMLMAALRLNIPVIFVSGGPMEAGKTKLSDKLIKLDLVDAMVAGADDRVSDADSEQIERSACPTCGSCSGMFTANSMNCLTEALGLSLPGNGSMLATHADRRELFLEAGRRIMDLTTRYYRDDDQSALPRNIANFNAFENAMTLDIAMGGSSNTVLHLLAAAIEAEVDFSMDDIDRLSRLVPHLCKVAPSTPKYHMEDVHRAGGVMGILGELDRAGLLHNDAYHVAGSNLAEVLAKYDIAQSKDEAVHKFFSAGPAGIPTTKAFSQDCRWDSVDIDREAGCIRTREFAFSQEGGLAVLSGNVALDGCIVKTAGVEVENHTFIGSARVYESQDDAVAGILGGEVVEGDVVVIRYEGPKGGPGMQEMLYPTSYLKSRGLGTKCALITDGRFSGGTSGLSIGHVSPEAAAGGTIALVNTGDRIEIDIPARSIKLAISDVELAARRTAMEALGKDAWKPVGRVRQVSMALKAYALLATSADKGAVRDTSKLG.

Residue Asp-81 participates in Mg(2+) binding. Cys-122 is a [2Fe-2S] cluster binding site. Residues Asp-123 and Lys-124 each coordinate Mg(2+). At Lys-124 the chain carries N6-carboxylysine. Residue Cys-195 participates in [2Fe-2S] cluster binding. Glu-491 lines the Mg(2+) pocket. Ser-517 functions as the Proton acceptor in the catalytic mechanism.

The protein belongs to the IlvD/Edd family. As to quaternary structure, homodimer. [2Fe-2S] cluster serves as cofactor. Mg(2+) is required as a cofactor.

It catalyses the reaction (2R)-2,3-dihydroxy-3-methylbutanoate = 3-methyl-2-oxobutanoate + H2O. It carries out the reaction (2R,3R)-2,3-dihydroxy-3-methylpentanoate = (S)-3-methyl-2-oxopentanoate + H2O. The protein operates within amino-acid biosynthesis; L-isoleucine biosynthesis; L-isoleucine from 2-oxobutanoate: step 3/4. It participates in amino-acid biosynthesis; L-valine biosynthesis; L-valine from pyruvate: step 3/4. Functions in the biosynthesis of branched-chain amino acids. Catalyzes the dehydration of (2R,3R)-2,3-dihydroxy-3-methylpentanoate (2,3-dihydroxy-3-methylvalerate) into 2-oxo-3-methylpentanoate (2-oxo-3-methylvalerate) and of (2R)-2,3-dihydroxy-3-methylbutanoate (2,3-dihydroxyisovalerate) into 2-oxo-3-methylbutanoate (2-oxoisovalerate), the penultimate precursor to L-isoleucine and L-valine, respectively. This chain is Dihydroxy-acid dehydratase, found in Shewanella piezotolerans (strain WP3 / JCM 13877).